A 107-amino-acid polypeptide reads, in one-letter code: MTKSELVAQLATRFPQLVLKDADFAVKTMLDAMSEALANGHRIEIRGFGSFGLNRRPSRVGRNPKSGEKVLVPEKYVPHFKPGKELRERVDRRAGEPLKAEDPDDDL.

Basic and acidic residues predominate over residues 82–101; sequence PGKELRERVDRRAGEPLKAE. Residues 82–107 are disordered; that stretch reads PGKELRERVDRRAGEPLKAEDPDDDL.

The protein belongs to the bacterial histone-like protein family. In terms of assembly, heterodimer of an alpha and a beta chain.

In terms of biological role, this protein is one of the two subunits of integration host factor, a specific DNA-binding protein that functions in genetic recombination as well as in transcriptional and translational control. The chain is Integration host factor subunit beta from Paraburkholderia xenovorans (strain LB400).